The sequence spans 646 residues: Serine/threonine-protein kinase sck2 (646 aa).

2 disordered regions span residues 17-85 (VSTN…LPEV) and 143-176 (GRDIGTSSRDSANVSRSSSMMSSHPIPTPAIQRT). Residues 68-80 (SDQSTVGNRNSND) show a composition bias toward polar residues. A compositionally biased stretch (low complexity) spans 149–165 (SSRDSANVSRSSSMMSS). Residues 266-527 (FVPLKLIGKG…VEEVMKHPFF (262 aa)) form the Protein kinase domain. ATP is bound by residues 272 to 280 (IGKGTFGQV) and Lys295. The Proton acceptor role is filled by Asp392. Positions 528-605 (DGIDWKKLAA…IDASAMDEAF (78 aa)) constitute an AGC-kinase C-terminal domain. Positions 609-646 (NSNDSASSISSQDDYSKDNSDMDLNRANDEVFMGQIDP) are disordered. Low complexity predominate over residues 610–621 (SNDSASSISSQD). Residues 622 to 637 (DYSKDNSDMDLNRAND) are compositionally biased toward basic and acidic residues.

It belongs to the protein kinase superfamily. AGC Ser/Thr protein kinase family. PKC subfamily.

The enzyme catalyses L-seryl-[protein] + ATP = O-phospho-L-seryl-[protein] + ADP + H(+). It catalyses the reaction L-threonyl-[protein] + ATP = O-phospho-L-threonyl-[protein] + ADP + H(+). Its function is as follows. Protein kinase that is part of growth control pathway which is at least partially redundant with the cAMP pathway. This chain is Serine/threonine-protein kinase sck2 (sck2), found in Schizosaccharomyces pombe (strain 972 / ATCC 24843) (Fission yeast).